Consider the following 116-residue polypeptide: Protein Wnt-5(III) (116 aa).

A lipid anchor (O-palmitoleoyl serine; by PORCN) is attached at S1. The N-linked (GlcNAc...) asparagine glycan is linked to N69. C82 and C97 are joined by a disulfide.

Belongs to the Wnt family. Post-translationally, palmitoleoylation is required for efficient binding to frizzled receptors. Depalmitoleoylation leads to Wnt signaling pathway inhibition.

It is found in the secreted. Its subcellular location is the extracellular space. The protein localises to the extracellular matrix. Functionally, ligand for members of the frizzled family of seven transmembrane receptors. Probable developmental protein. May be a signaling molecule which affects the development of discrete regions of tissues. Is likely to signal over only few cell diameters. This is Protein Wnt-5(III) (WNT-5(III)) from Eptatretus stoutii (Pacific hagfish).